A 601-amino-acid chain; its full sequence is MSGRFVRASKYRHIFGQTCKKELCYDNIKLSNNAWDSNLLSVNPFYLSVNWNAGAGGALAVIPLNERGKLPDQVNLFRGHTAAVLDTDWNPFHDQVLASGGDDSKIMIWKVPEDYTVMEPYEDVHPIAELKGHSRKVGLVQYHPTAANVLASSSADNTIKLWDCEKGVAHVSLKMDVMCQSMSFNADGTRLVTTSRDKKVRVWDPRTDKPVSVGNGHAGAKNPRVVWLGSLDRFATTGFSKMSDRQIALWDPTNLSEPIGGFTTLDTGSGILMPFWDDGTKVIYLAGKGDGNIRYYEYENDVFHYLSEFKSVDPQRGIAFLPKRGVNVSENEVMRAYKSVNDSIIEPISFIVPRRSESFQSDIYPPAPSGKPSLTAEEWASGKDAQPDLLDMSTLYESKGTVEKAVSATVPSAGAQVQKHNEEKVETPKPEAQPVSKPKESAEEQKPSKEPEVKPTTPSASKVEEPSKKRDEDNHQKEETVTQPKREKTPVEKSFPKPASSPVTFSEDVKKEPSEEKKLEVSDEAPKAAPLAESKKVEEKEPFYVSKDKKDISAVNLADLNKRFEGFEKRYEEELAIRDWKIAQLEDKLAKLTEAIKEKCN.

WD repeat units lie at residues 79-119, 132-172, 174-213, 220-260, and 266-306; these read GHTA…TVME, GHSR…AHVS, KMDV…PVSV, AKNP…EPIG, and DTGS…FHYL. Disordered regions lie at residues 361–386 and 407–540; these read SDIY…KDAQ and SATV…VEEK. 3 stretches are compositionally biased toward basic and acidic residues: residues 419 to 429, 437 to 453, and 462 to 495; these read KHNEEKVETPK, KPKE…EPEV, and KVEE…EKSF. Phosphoserine occurs at positions 500 and 501. The span at 507–526 shows a compositional bias: basic and acidic residues; the sequence is EDVKKEPSEEKKLEVSDEAP. Residue Ser553 is modified to Phosphoserine. Residues 556 to 600 are a coiled coil; the sequence is NLADLNKRFEGFEKRYEEELAIRDWKIAQLEDKLAKLTEAIKEKC.

The protein belongs to the WD repeat coronin family. As to quaternary structure, binds to F-actin.

The polypeptide is Coronin-like protein crn1 (crn1) (Schizosaccharomyces pombe (strain 972 / ATCC 24843) (Fission yeast)).